A 284-amino-acid polypeptide reads, in one-letter code: Mediator of RNA polymerase II transcription subunit 4 (284 aa).

N-acetylserine is present on Ser2. The disordered stretch occupies residues 205 to 284; the sequence is RIPGEEVEET…DLDLFDPDDF (80 aa). Over residues 225–238 the composition is skewed to basic and acidic residues; sequence EEQKGQMAKKEGTP. At Thr237 the chain carries Phosphothreonine; by KIN28. Ser242 is subject to Phosphoserine. The segment covering 248 to 265 has biased composition (basic and acidic residues); that stretch reads TAKEVGDEADNTKDKEKE. Positions 266–284 are enriched in acidic residues; the sequence is ENNDDALDLDLDLFDPDDF.

It belongs to the Mediator complex subunit 4 family. In terms of assembly, component of the Mediator complex, which is composed of at least 21 subunits that form three structurally distinct submodules. The Mediator head module contains MED6, MED8, MED11, SRB4/MED17, SRB5/MED18, ROX3/MED19, SRB2/MED20 and SRB6/MED22, the middle module contains MED1, MED4, NUT1/MED5, MED7, CSE2/MED9, NUT2/MED10, SRB7/MED21 and SOH1/MED31, and the tail module contains MED2, PGD1/MED3, RGR1/MED14, GAL11/MED15 and SIN4/MED16. The head and the middle modules interact directly with RNA polymerase II, whereas the elongated tail module interacts with gene-specific regulatory proteins. MED4 interacts directly with MED1, MED7 and SRB7/MED21.

The protein localises to the nucleus. Its function is as follows. Component of the Mediator complex, a coactivator involved in the regulated transcription of nearly all RNA polymerase II-dependent genes. Mediator functions as a bridge to convey information from gene-specific regulatory proteins to the basal RNA polymerase II transcription machinery. The Mediator complex, having a compact conformation in its free form, is recruited to promoters by direct interactions with regulatory proteins and serves for the assembly of a functional preinitiation complex with RNA polymerase II and the general transcription factors. The Mediator complex unfolds to an extended conformation and partially surrounds RNA polymerase II, specifically interacting with the unphosphorylated form of the C-terminal domain (CTD) of RNA polymerase II. The Mediator complex dissociates from the RNA polymerase II holoenzyme and stays at the promoter when transcriptional elongation begins. This chain is Mediator of RNA polymerase II transcription subunit 4 (MED4), found in Saccharomyces cerevisiae (strain ATCC 204508 / S288c) (Baker's yeast).